Consider the following 130-residue polypeptide: Phosphoribosyl-AMP cyclohydrolase (130 aa).

Residue aspartate 80 coordinates Mg(2+). Cysteine 81 contacts Zn(2+). Residues aspartate 82 and aspartate 84 each contribute to the Mg(2+) site. Zn(2+)-binding residues include cysteine 98 and cysteine 105.

The protein belongs to the PRA-CH family. Homodimer. Mg(2+) is required as a cofactor. Requires Zn(2+) as cofactor.

It localises to the cytoplasm. It catalyses the reaction 1-(5-phospho-beta-D-ribosyl)-5'-AMP + H2O = 1-(5-phospho-beta-D-ribosyl)-5-[(5-phospho-beta-D-ribosylamino)methylideneamino]imidazole-4-carboxamide. The protein operates within amino-acid biosynthesis; L-histidine biosynthesis; L-histidine from 5-phospho-alpha-D-ribose 1-diphosphate: step 3/9. Catalyzes the hydrolysis of the adenine ring of phosphoribosyl-AMP. The sequence is that of Phosphoribosyl-AMP cyclohydrolase from Oleidesulfovibrio alaskensis (strain ATCC BAA-1058 / DSM 17464 / G20) (Desulfovibrio alaskensis).